Reading from the N-terminus, the 207-residue chain is Guanylate kinase (207 aa).

One can recognise a Guanylate kinase-like domain in the interval 6–185 (GLLIVLSGPS…AKNRIQCIVE (180 aa)). 13–20 (GPSGVGKG) is a binding site for ATP.

Belongs to the guanylate kinase family.

Its subcellular location is the cytoplasm. It catalyses the reaction GMP + ATP = GDP + ADP. In terms of biological role, essential for recycling GMP and indirectly, cGMP. The chain is Guanylate kinase from Staphylococcus aureus (strain bovine RF122 / ET3-1).